Reading from the N-terminus, the 345-residue chain is MSILNSGSCMMTDTNQNMECKVDFKKGEFDLQPLQINQFGFTKTQLHKPLTRNLSNKEDTHVPKRQKVSEPYFRGETERNVKSHQDRAASIYHEAMNGASGIHKQMSLPEYSPQMGNSWEIQVPMTTRHSISETPTKPFTATTAIAGSAGSLPRNTTIGLPGPSALLKHESGKNENQVRVCLYHKHYSRWYLPFDKDDDNQLVEAYAKYFSSENRPSIFYVLQGISFGPECEYVLRRKHWWNPWAEKVMRREIVERKIDTHPGCRTVAERYEQIEASGSEELLIIPIYKINMWVLSLLLFSAGGSVLIGLWMRLSDPSFAHGMLLNLGIGSIGSFLYLLSNTWCR.

2 consecutive transmembrane segments (helical) span residues 292–312 (MWVLSLLLFSAGGSVLIGLWM) and 319–329 (FAHGMLLNLGI).

The protein localises to the membrane. Functionally, required for correct meiotic chromosome segregation. Appears to also have role in sporulation. This chain is Meiotically up-regulated gene 97 protein (mug97), found in Schizosaccharomyces pombe (strain 972 / ATCC 24843) (Fission yeast).